Consider the following 336-residue polypeptide: DNA repair protein RAD51 homolog A (336 aa).

The HhH domain occupies Thr-45–Glu-74. Gly-124–Thr-131 contributes to the ATP binding site. A Nuclear export signal motif is present at residues Leu-242 to Gly-257.

It belongs to the RecA family. RAD51 subfamily. As to quaternary structure, forms linear homooligomers, giving rise to a RAD51 nucleoprotein filament, which is essential for strand-pairing reactions during DNA recombination.

It localises to the nucleus. Its subcellular location is the cytoplasm. It is found in the chromosome. Functionally, plays an important role in homologous strand exchange, a key step in DNA repair through homologous recombination (HR). Binds to single-stranded DNA in an ATP-dependent manner to form nucleoprotein filaments which are essential for the homology search and strand exchange. Catalyzes the recognition of homology and strand exchange between homologous DNA partners to form a joint molecule between a processed DNA break and the repair template. Recruited to resolve stalled replication forks during replication stress. Also involved in interstrand cross-link repair. The polypeptide is DNA repair protein RAD51 homolog A (rad51-a) (Xenopus laevis (African clawed frog)).